The primary structure comprises 265 residues: Thioredoxin-related transmembrane protein 2 homolog (265 aa).

Residues 1–32 (MLIPRLDEVRRALTAFHFFNTLLALAFPVIRS) form the signal peptide. Topologically, residues 33 to 96 (TSLCDYVFAV…KIAGMFLFIR (64 aa)) are extracellular. A helical membrane pass occupies residues 97-117 (ADILPGIIYILACLIVTVLFP). Residues 118-265 (EPVYNGPEQV…KKGAKAKKED (148 aa)) are Cytoplasmic-facing. The region spanning 126-230 (QVTYFQGEQL…RPLVNDSRRA (105 aa)) is the Thioredoxin domain. The Di-lysine motif motif lies at 262 to 265 (KKED).

Its subcellular location is the membrane. This Caenorhabditis elegans protein is Thioredoxin-related transmembrane protein 2 homolog.